The sequence spans 850 residues: METQTSWLSLWRWGLMIFGMLMICSARENLWVTVYYGVPVWRDAKTTLFCASDAKAYSTEKHNVWATHACVPTDPNPQEMSLPNVTENFNMWKNDMVDQMQEDIISVWDESLKPCVKITPLCVTLNCSDVNSNNSTDSNSSASNNSPEIMKNCSFNVTTEIRNKRKQEYALFYRQDVVPINSDNKSYILINCNTSVIKQACPKVSFQPIPIHYCAPAGFAILKCNNKTFNGTGPCKNVSTVQCTHGIKPVVSTQLLLNGSVAEGDIIIRSENISDNAKNIIVQLNDTVEIVCTRPNNNTRKGIHMGPGQVLYATGEIIGDIRKAYCNISRKDWNNTLRRVAKKLREHFNKTIDFTSPSGGDIEITTHSFNCGGEFFYCNTSTLFNSSWDENNIKDTNSTNDNTTITIPCKIKQIVRMWQRTGQAIYAPPIAGNITCKSNITGLLLTRDGGNRNGSENGTETFRPTGGNMKDNWRSELYKYKVVELEPLGVAPTKAKRRVVEREKRAVGIGAVFLGFLGTAGSTMGAASITLTVQVRQLLSGIVQQQSNLLKAIXAQQHLLKLTVWGIKQLQARVLAVERYLKDQQLLGIWGCSGKLICTTNVPWNASWSNKSYEDIWENMTWIQWEREINNYTGIIYSLIEEAQNQQETNEKDLLALDKWTNLWNWFNISNWLWYIKIFIMIIGGLIGLRIIFAVLAIVNRVRQGYSPLSFQTLIPNPTEADRPGGIEEGGGEQGRTRSIRLVNGFLALAWDDLRSLCLFSYHRLRDFVLIAARTVGTLGLRGWEILKYLVNLVWYWGQELKNSAISLLNTTAIAVAEGTDRIIEIAQRAFRAILHIPRRIRQGLERALL.

Positions 1–28 (METQTSWLSLWRWGLMIFGMLMICSARE) are cleaved as a signal peptide. Residues 29–678 (NLWVTVYYGV…ISNWLWYIKI (650 aa)) are Extracellular-facing. An intrachain disulfide couples Cys-50 to Cys-70. N-linked (GlcNAc...) asparagine; by host glycosylation is found at Asn-84, Asn-126, Asn-133, Asn-134, Asn-139, Asn-152, Asn-156, Asn-184, Asn-193, Asn-226, Asn-230, Asn-237, Asn-258, Asn-272, Asn-285, Asn-297, Asn-327, Asn-334, and Asn-349. 5 cysteine pairs are disulfide-bonded: Cys-115/Cys-201, Cys-122/Cys-192, Cys-127/Cys-153, Cys-214/Cys-243, and Cys-224/Cys-235. The tract at residues 127–152 (CSDVNSNNSTDSNSSASNNSPEIMKN) is V1. Residues 153–192 (CSFNVTTEIRNKRKQEYALFYRQDVVPINSDNKSYILINC) are V2. The V3 stretch occupies residues 292 to 325 (CTRPNNNTRKGIHMGPGQVLYATGEIIGDIRKAY). A disulfide bridge links Cys-292 with Cys-326. Positions 357-367 (PSGGDIEITTH) are CD4-binding loop. Disulfide bonds link Cys-371/Cys-436 and Cys-378/Cys-409. Residues 378 to 409 (CNTSTLFNSSWDENNIKDTNSTNDNTTITIPC) form a V4 region. N-linked (GlcNAc...) asparagine; by host glycans are attached at residues Asn-379, Asn-385, Asn-397, Asn-402, Asn-433, Asn-439, Asn-453, and Asn-457. The disordered stretch occupies residues 447-467 (RDGGNRNGSENGTETFRPTGG). The segment covering 453-462 (NGSENGTETF) has biased composition (polar residues). V5 regions lie at residues 453-465 (NGSE…FRPT) and 454-465 (GSENGTETFRPT). Residues 506–526 (AVGIGAVFLGFLGTAGSTMGA) form a fusion peptide region. The segment at 568-586 (KQLQARVLAVERYLKDQQL) is immunosuppression. A disulfide bond links Cys-592 and Cys-598. N-linked (GlcNAc...) asparagine; by host glycans are attached at residues Asn-605, Asn-610, Asn-619, Asn-631, and Asn-668. The stretch at 627–661 (REINNYTGIIYSLIEEAQNQQETNEKDLLALDKWT) forms a coiled coil. The segment at 656 to 677 (ALDKWTNLWNWFNISNWLWYIK) is MPER; binding to GalCer. The chain crosses the membrane as a helical span at residues 679-699 (FIMIIGGLIGLRIIFAVLAIV). Residues 700–850 (NRVRQGYSPL…IRQGLERALL (151 aa)) are Cytoplasmic-facing. The YXXL motif; contains endocytosis signal motif lies at 706–709 (YSPL). Cys-758 carries the S-palmitoyl cysteine; by host lipid modification. The short motif at 849–850 (LL) is the Di-leucine internalization motif element.

This sequence belongs to the HIV-1 env protein family. In terms of assembly, the mature envelope protein (Env) consists of a homotrimer of non-covalently associated gp120-gp41 heterodimers. The resulting complex protrudes from the virus surface as a spike. There seems to be as few as 10 spikes on the average virion. Interacts with host CD4, CCR5 and CXCR4. Gp120 also interacts with the C-type lectins CD209/DC-SIGN and CLEC4M/DC-SIGNR (collectively referred to as DC-SIGN(R)). Gp120 and gp41 interact with GalCer. Gp120 interacts with host ITGA4/ITGB7 complex; on CD4+ T-cells, this interaction results in rapid activation of integrin ITGAL/LFA-1, which facilitates efficient cell-to-cell spreading of HIV-1. Gp120 interacts with cell-associated heparan sulfate; this interaction increases virus infectivity on permissive cells and may be involved in infection of CD4- cells. As to quaternary structure, the mature envelope protein (Env) consists of a homotrimer of non-covalently associated gp120-gp41 heterodimers. The resulting complex protrudes from the virus surface as a spike. There seems to be as few as 10 spikes on the average virion. In terms of processing, highly glycosylated by host. The high number of glycan on the protein is reffered to as 'glycan shield' because it contributes to hide protein sequence from adaptive immune system. Post-translationally, palmitoylation of the transmembrane protein and of Env polyprotein (prior to its proteolytic cleavage) is essential for their association with host cell membrane lipid rafts. Palmitoylation is therefore required for envelope trafficking to classical lipid rafts, but not for viral replication. Specific enzymatic cleavages in vivo yield mature proteins. Envelope glycoproteins are synthesized as an inactive precursor that is heavily N-glycosylated and processed likely by host cell furin in the Golgi to yield the mature SU and TM proteins. The cleavage site between SU and TM requires the minimal sequence [KR]-X-[KR]-R. About 2 of the 9 disulfide bonds of gp41 are reduced by P4HB/PDI, following binding to CD4 receptor.

It localises to the virion membrane. It is found in the host cell membrane. The protein localises to the host endosome membrane. Its function is as follows. Oligomerizes in the host endoplasmic reticulum into predominantly trimers. In a second time, gp160 transits in the host Golgi, where glycosylation is completed. The precursor is then proteolytically cleaved in the trans-Golgi and thereby activated by cellular furin or furin-like proteases to produce gp120 and gp41. Functionally, attaches the virus to the host lymphoid cell by binding to the primary receptor CD4. This interaction induces a structural rearrangement creating a high affinity binding site for a chemokine coreceptor like CXCR4 and/or CCR5. Acts as a ligand for CD209/DC-SIGN and CLEC4M/DC-SIGNR, which are respectively found on dendritic cells (DCs), and on endothelial cells of liver sinusoids and lymph node sinuses. These interactions allow capture of viral particles at mucosal surfaces by these cells and subsequent transmission to permissive cells. HIV subverts the migration properties of dendritic cells to gain access to CD4+ T-cells in lymph nodes. Virus transmission to permissive T-cells occurs either in trans (without DCs infection, through viral capture and transmission), or in cis (following DCs productive infection, through the usual CD4-gp120 interaction), thereby inducing a robust infection. In trans infection, bound virions remain infectious over days and it is proposed that they are not degraded, but protected in non-lysosomal acidic organelles within the DCs close to the cell membrane thus contributing to the viral infectious potential during DCs' migration from the periphery to the lymphoid tissues. On arrival at lymphoid tissues, intact virions recycle back to DCs' cell surface allowing virus transmission to CD4+ T-cells. In terms of biological role, acts as a class I viral fusion protein. Under the current model, the protein has at least 3 conformational states: pre-fusion native state, pre-hairpin intermediate state, and post-fusion hairpin state. During fusion of viral and target intracellular membranes, the coiled coil regions (heptad repeats) assume a trimer-of-hairpins structure, positioning the fusion peptide in close proximity to the C-terminal region of the ectodomain. The formation of this structure appears to drive apposition and subsequent fusion of viral and target cell membranes. Complete fusion occurs in host cell endosomes and is dynamin-dependent, however some lipid transfer might occur at the plasma membrane. The virus undergoes clathrin-dependent internalization long before endosomal fusion, thus minimizing the surface exposure of conserved viral epitopes during fusion and reducing the efficacy of inhibitors targeting these epitopes. Membranes fusion leads to delivery of the nucleocapsid into the cytoplasm. The sequence is that of Envelope glycoprotein gp160 from Human immunodeficiency virus type 1 group M subtype J (isolate SE9173) (HIV-1).